The sequence spans 1098 residues: Mediator of RNA polymerase II transcription subunit 5 (1098 aa).

Residues 1019 to 1041 (PDDVQKSADMKPDTGIKEDDSEK) form a disordered region. Basic and acidic residues predominate over residues 1021–1041 (DVQKSADMKPDTGIKEDDSEK).

It belongs to the Mediator complex subunit 5 family. As to quaternary structure, component of the Mediator complex.

The protein localises to the nucleus. Functionally, component of the Mediator complex, a coactivator involved in the regulated transcription of nearly all RNA polymerase II-dependent genes. Mediator functions as a bridge to convey information from gene-specific regulatory proteins to the basal RNA polymerase II transcription machinery. Mediator is recruited to promoters by direct interactions with regulatory proteins and serves as a scaffold for the assembly of a functional preinitiation complex with RNA polymerase II and the general transcription factors. This Eremothecium gossypii (strain ATCC 10895 / CBS 109.51 / FGSC 9923 / NRRL Y-1056) (Yeast) protein is Mediator of RNA polymerase II transcription subunit 5 (NUT1).